Here is a 395-residue protein sequence, read N- to C-terminus: Chorismate synthase (395 aa).

NADP(+) contacts are provided by Arg-40 and Arg-46. Residues 99-120 (PREGRNAPLSRPRPGHADLTGM) are disordered. FMN is bound by residues 134-136 (RSS), 256-257 (QA), Gly-301, 316-320 (KPIPS), and Arg-342.

This sequence belongs to the chorismate synthase family. In terms of assembly, homotetramer. FMNH2 is required as a cofactor.

It carries out the reaction 5-O-(1-carboxyvinyl)-3-phosphoshikimate = chorismate + phosphate. The protein operates within metabolic intermediate biosynthesis; chorismate biosynthesis; chorismate from D-erythrose 4-phosphate and phosphoenolpyruvate: step 7/7. Its function is as follows. Catalyzes the anti-1,4-elimination of the C-3 phosphate and the C-6 proR hydrogen from 5-enolpyruvylshikimate-3-phosphate (EPSP) to yield chorismate, which is the branch point compound that serves as the starting substrate for the three terminal pathways of aromatic amino acid biosynthesis. This reaction introduces a second double bond into the aromatic ring system. In Bifidobacterium longum (strain DJO10A), this protein is Chorismate synthase.